The sequence spans 161 residues: Dihydrofolate reductase (161 aa).

The region spanning 1–160 is the DHFR domain; it reads MTMVGLIWAQ…LRYRLYSYHR (160 aa). 7–9 contacts substrate; the sequence is IWA. Residues 8 to 9 and 16 to 21 contribute to the NADP(+) site; these read WA and IGRGGD. The substrate site is built by Asp29 and Arg34. 45-48 is a binding site for NADP(+); that stretch reads GRRT. Residue Arg62 participates in substrate binding. NADP(+)-binding positions include 67 to 70, Gly82, and 96 to 101; these read LSRQ and IGGGQV. Tyr102 and Thr115 together coordinate substrate.

The protein belongs to the dihydrofolate reductase family.

It catalyses the reaction (6S)-5,6,7,8-tetrahydrofolate + NADP(+) = 7,8-dihydrofolate + NADPH + H(+). It functions in the pathway cofactor biosynthesis; tetrahydrofolate biosynthesis; 5,6,7,8-tetrahydrofolate from 7,8-dihydrofolate: step 1/1. Functionally, key enzyme in folate metabolism. Catalyzes an essential reaction for de novo glycine and purine synthesis, and for DNA precursor synthesis. This is Dihydrofolate reductase (folA) from Mycobacterium tuberculosis (strain CDC 1551 / Oshkosh).